The chain runs to 329 residues: Glycerol-3-phosphate dehydrogenase [NAD(P)+] (329 aa).

Residues Trp11 and Lys101 each coordinate NADPH. Sn-glycerol 3-phosphate contacts are provided by Lys101, Gly132, and Ser134. An NADPH-binding site is contributed by Ala136. The sn-glycerol 3-phosphate site is built by Lys188, Asp241, Ser251, Arg252, and Asn253. The Proton acceptor role is filled by Lys188. An NADPH-binding site is contributed by Arg252. NADPH-binding residues include Val276 and Glu278.

Belongs to the NAD-dependent glycerol-3-phosphate dehydrogenase family.

The protein localises to the cytoplasm. It carries out the reaction sn-glycerol 3-phosphate + NAD(+) = dihydroxyacetone phosphate + NADH + H(+). It catalyses the reaction sn-glycerol 3-phosphate + NADP(+) = dihydroxyacetone phosphate + NADPH + H(+). The protein operates within membrane lipid metabolism; glycerophospholipid metabolism. Its function is as follows. Catalyzes the reduction of the glycolytic intermediate dihydroxyacetone phosphate (DHAP) to sn-glycerol 3-phosphate (G3P), the key precursor for phospholipid synthesis. The sequence is that of Glycerol-3-phosphate dehydrogenase [NAD(P)+] from Phytoplasma australiense.